Here is a 446-residue protein sequence, read N- to C-terminus: MDSDFSHAFQKELTCVICLNYLVDPVTICCGHSFCRPCLCLSWEEAQSPANCPACREPSPKMDFKTNILLKNLVTIARKASLWQFLSSEKQICGTHRQTKKMFCDMDKSLLCLLCSNSQEHGAHKHYPIEEAAEEDREKLLKQMRILWKKIQENQRNLYEERRTAFLLRGDVVLRAQMIRNEYRKLHPVLHKEEKQHLERLNKEYQEIFQQLQRSWVKMDQKSKHLKEMYQELMEMCHKPEVELLQDLGDIVARSESVLLHMPQPVNPELTAGPITGLVYRLNRFRVEISFHFEVTNHNIRLFEDVRSWMFRRGPLNSDRSDYFAAWGARVFSFGKHYWELDVDNSCDWALGVCNNSWIRKNSTMVNSEDIFLLLCLKVDNHFNLLTTSPVFPHYIEKPLGRVGVFLDFESGSVSFLNVTKSSLIWSYPAGSLTFPVRPFFYTGHR.

The RING-type zinc finger occupies 15–56 (CVICLNYLVDPVTICCGHSFCRPCLCLSWEEAQSPANCPACR). Residues 88–129 (SEKQICGTHRQTKKMFCDMDKSLLCLLCSNSQEHGAHKHYPI) form a B box-type zinc finger. Zn(2+) is bound by residues C93, H96, C115, and H121. 2 coiled-coil regions span residues 129–158 (IEEA…QRNL) and 190–220 (LHKE…VKMD). The region spanning 269 to 446 (ELTAGPITGL…VRPFFYTGHR (178 aa)) is the B30.2/SPRY domain.

The protein belongs to the TRIM/RBCC family.

This is Tripartite motif-containing protein 43B (TRIM43B) from Homo sapiens (Human).